The primary structure comprises 183 residues: Inner membrane-spanning protein YciB (183 aa).

5 helical membrane passes run 22–42 (IYAA…ITYL), 50–70 (MHLA…FFHD), 72–92 (AFIK…LIAS), 118–138 (VTWY…YIAF), and 148–168 (FKVF…VVYL).

It belongs to the YciB family.

Its subcellular location is the cell inner membrane. Functionally, plays a role in cell envelope biogenesis, maintenance of cell envelope integrity and membrane homeostasis. The polypeptide is Inner membrane-spanning protein YciB (Shewanella frigidimarina (strain NCIMB 400)).